The primary structure comprises 311 residues: tRNA dimethylallyltransferase (311 aa).

11-18 (GPTASGKS) lines the ATP pocket. 13–18 (TASGKS) is a binding site for substrate. 2 interaction with substrate tRNA regions span residues 36 to 39 (DSMQ) and 160 to 164 (QRLIR).

Belongs to the IPP transferase family. In terms of assembly, monomer. Mg(2+) is required as a cofactor.

It catalyses the reaction adenosine(37) in tRNA + dimethylallyl diphosphate = N(6)-dimethylallyladenosine(37) in tRNA + diphosphate. In terms of biological role, catalyzes the transfer of a dimethylallyl group onto the adenine at position 37 in tRNAs that read codons beginning with uridine, leading to the formation of N6-(dimethylallyl)adenosine (i(6)A). The chain is tRNA dimethylallyltransferase from Rickettsia typhi (strain ATCC VR-144 / Wilmington).